A 214-amino-acid chain; its full sequence is Pyrophosphatase PpaX (214 aa).

D9 acts as the Nucleophile in catalysis.

Belongs to the HAD-like hydrolase superfamily. PpaX family. Requires Mg(2+) as cofactor.

It carries out the reaction diphosphate + H2O = 2 phosphate + H(+). Hydrolyzes pyrophosphate formed during P-Ser-HPr dephosphorylation by HPrK/P. Might play a role in controlling the intracellular pyrophosphate pool. The chain is Pyrophosphatase PpaX from Oceanobacillus iheyensis (strain DSM 14371 / CIP 107618 / JCM 11309 / KCTC 3954 / HTE831).